The primary structure comprises 438 residues: 23S rRNA (uracil(1939)-C(5))-methyltransferase RlmD (438 aa).

The region spanning arginine 9–lysine 68 is the TRAM domain. 4 residues coordinate [4Fe-4S] cluster: cysteine 81, cysteine 87, cysteine 90, and cysteine 168. S-adenosyl-L-methionine is bound by residues glutamine 272, phenylalanine 301, asparagine 306, glutamate 322, asparagine 349, and aspartate 370. Cysteine 396 (nucleophile) is an active-site residue.

Belongs to the class I-like SAM-binding methyltransferase superfamily. RNA M5U methyltransferase family. RlmD subfamily.

It catalyses the reaction uridine(1939) in 23S rRNA + S-adenosyl-L-methionine = 5-methyluridine(1939) in 23S rRNA + S-adenosyl-L-homocysteine + H(+). Functionally, catalyzes the formation of 5-methyl-uridine at position 1939 (m5U1939) in 23S rRNA. The chain is 23S rRNA (uracil(1939)-C(5))-methyltransferase RlmD from Photorhabdus laumondii subsp. laumondii (strain DSM 15139 / CIP 105565 / TT01) (Photorhabdus luminescens subsp. laumondii).